A 428-amino-acid chain; its full sequence is Enolase (428 aa).

(2R)-2-phosphoglycerate is bound at residue glutamine 164. The active-site Proton donor is glutamate 206. Positions 243, 286, and 313 each coordinate Mg(2+). Residues lysine 338, arginine 367, serine 368, and lysine 389 each coordinate (2R)-2-phosphoglycerate. Residue lysine 338 is the Proton acceptor of the active site.

Belongs to the enolase family. Mg(2+) serves as cofactor.

Its subcellular location is the cytoplasm. The protein localises to the secreted. It localises to the cell surface. It catalyses the reaction (2R)-2-phosphoglycerate = phosphoenolpyruvate + H2O. It participates in carbohydrate degradation; glycolysis; pyruvate from D-glyceraldehyde 3-phosphate: step 4/5. In terms of biological role, catalyzes the reversible conversion of 2-phosphoglycerate (2-PG) into phosphoenolpyruvate (PEP). It is essential for the degradation of carbohydrates via glycolysis. This Dehalococcoides mccartyi (strain ATCC BAA-2100 / JCM 16839 / KCTC 5957 / BAV1) protein is Enolase.